A 257-amino-acid chain; its full sequence is Large ribosomal subunit protein uL2 (257 aa).

The disordered stretch occupies residues 207-257; it reads VDHPHGGGNHQHVGHPTTLKRSSPPGQKAGKVAARRTGLIRGGNKEGAADN.

Belongs to the universal ribosomal protein uL2 family. In terms of assembly, component of the large ribosomal subunit.

It is found in the cytoplasm. Functionally, component of the large ribosomal subunit. The ribosome is a large ribonucleoprotein complex responsible for the synthesis of proteins in the cell. In Entamoeba histolytica (strain ATCC 30459 / HM-1:IMSS / ABRM), this protein is Large ribosomal subunit protein uL2 (RPL8).